Here is a 294-residue protein sequence, read N- to C-terminus: Nucleoside-specific channel-forming protein Tsx (294 aa).

Positions 1–22 (MKKTLLAAGAVVALSTTFAAGA) are cleaved as a signal peptide.

It belongs to the nucleoside-specific channel-forming outer membrane porin (Tsx) (TC 1.B.10) family.

The protein resides in the cell outer membrane. Functions as a substrate-specific channel for nucleosides and deoxynucleosides. Also functions in albicidin uptake and as receptor for colicin K. Also is a receptor for several Tsx-specific bacteriophages. This is Nucleoside-specific channel-forming protein Tsx from Klebsiella pneumoniae.